Here is a 117-residue protein sequence, read N- to C-terminus: Holo-[acyl-carrier-protein] synthase (117 aa).

Mg(2+) contacts are provided by D8 and E58.

This sequence belongs to the P-Pant transferase superfamily. AcpS family. Mg(2+) serves as cofactor.

The protein resides in the cytoplasm. It carries out the reaction apo-[ACP] + CoA = holo-[ACP] + adenosine 3',5'-bisphosphate + H(+). Transfers the 4'-phosphopantetheine moiety from coenzyme A to a Ser of acyl-carrier-protein. This is Holo-[acyl-carrier-protein] synthase from Latilactobacillus sakei subsp. sakei (strain 23K) (Lactobacillus sakei subsp. sakei).